The following is a 533-amino-acid chain: Multicopper oxidase CueO (533 aa).

The tat-type signal signal peptide spans methionine 1–alanine 28. 3 Plastocyanin-like domains span residues glutamine 53–serine 166, proline 221–aspartate 290, and alanine 416–serine 532. Cu cation-binding residues include histidine 102, histidine 104, histidine 142, and histidine 144. Cu cation-binding residues include histidine 458, histidine 461, histidine 463, histidine 514, cysteine 515, histidine 516, and histidine 520.

This sequence belongs to the multicopper oxidase family. In terms of assembly, monomer. Requires Cu cation as cofactor. Predicted to be exported by the Tat system. The position of the signal peptide cleavage has not been experimentally proven.

It is found in the periplasm. The catalysed reaction is 4 Cu(+) + O2 + 4 H(+) = 4 Cu(2+) + 2 H2O. Its function is as follows. Multicopper oxidase involved in copper homeostasis and copper tolerance under aerobic conditions. Is responsible for the oxidation of Cu(+) to the less harmful Cu(2+) in the periplasm, thereby preventing Cu(+) from entering the cytoplasm. This is Multicopper oxidase CueO (cueO) from Yersinia pestis.